Consider the following 407-residue polypeptide: Patatin-like protein 2 (407 aa).

The PNPLA domain occupies 22 to 228 (LSIDGGGIRG…AANNPALLAI (207 aa)). Positions 26 to 31 (GGGIRG) match the GXGXXG motif. The GXSXG motif lies at 64–68 (GTSTG). Ser66 acts as the Nucleophile in catalysis. Catalysis depends on Asp215, which acts as the Proton acceptor. The DGA/G motif lies at 215-217 (DGG). Ser398 is subject to Phosphoserine.

It belongs to the patatin family. In terms of tissue distribution, expressed specifically in roots.

The protein localises to the cytoplasm. In terms of biological role, possesses non-specific lipolytic acyl hydrolase (LAH) activity. Catalyzes the hydrolysis of the galactolipids monogalactosyldiacylglycerol (MGDG) and digalactosyldiacylglycerol (DGDG), and less efficiently the phoshpolipids phosphatidylcholine (PC), phosphatidylethanolamine (PE), phosphatidylglycerol (PG), phosphatidic acid (PA), phosphatidylserine (PS) and phosphatidylinositol (PI). Favors the release of fatty acid at the sn-1 position for PC or PE and the sn-2 position for PG, PA, PS and PI. Negatively affects disease resistance to the necrotic fungal pathogen Botrytis cinerea and the avirulent bacteria Pseudomonas syringae by promoting cell death and reducing the efficiency of the hypersensitive response, respectively. However, PLP2 contributes to resistance to cucumber mosaic virus (CMV), an obligate parasite inducing hypersensitive response. May negatively regulate oxylipin production, possibly via participating in membrane repair that includes removal of oxidatively modified lipids. This is Patatin-like protein 2 (PLP2) from Arabidopsis thaliana (Mouse-ear cress).